Reading from the N-terminus, the 220-residue chain is UPF0758 protein ASA_4229 (220 aa).

An MPN domain is found at 95-220 (EQLQRGDALT…TVSFAERGWL (126 aa)). 3 residues coordinate Zn(2+): H169, H171, and D182. Residues 169–182 (HNHPSGVAEPSRAD) carry the JAMM motif motif.

This sequence belongs to the UPF0758 family.

The sequence is that of UPF0758 protein ASA_4229 from Aeromonas salmonicida (strain A449).